The sequence spans 51 residues: Large ribosomal subunit protein eL39 (51 aa).

It belongs to the eukaryotic ribosomal protein eL39 family. Component of the large ribosomal subunit. Interacts with IMPACT.

The protein localises to the cytoplasm. Functionally, RNA-binding component of the large ribosomal subunit. The ribosome is a large ribonucleoprotein complex responsible for the synthesis of proteins in the cell. The sequence is that of Large ribosomal subunit protein eL39 (Rpl39) from Mus musculus (Mouse).